The following is a 299-amino-acid chain: Aspartate carbamoyltransferase catalytic subunit (299 aa).

Carbamoyl phosphate-binding residues include Arg-51 and Thr-52. Lys-79 is a binding site for L-aspartate. 3 residues coordinate carbamoyl phosphate: Arg-101, His-130, and Gln-133. Arg-163 and Arg-215 together coordinate L-aspartate. The carbamoyl phosphate site is built by Gly-256 and Pro-257.

This sequence belongs to the aspartate/ornithine carbamoyltransferase superfamily. ATCase family. As to quaternary structure, heterododecamer (2C3:3R2) of six catalytic PyrB chains organized as two trimers (C3), and six regulatory PyrI chains organized as three dimers (R2).

The catalysed reaction is carbamoyl phosphate + L-aspartate = N-carbamoyl-L-aspartate + phosphate + H(+). It functions in the pathway pyrimidine metabolism; UMP biosynthesis via de novo pathway; (S)-dihydroorotate from bicarbonate: step 2/3. Functionally, catalyzes the condensation of carbamoyl phosphate and aspartate to form carbamoyl aspartate and inorganic phosphate, the committed step in the de novo pyrimidine nucleotide biosynthesis pathway. The polypeptide is Aspartate carbamoyltransferase catalytic subunit (Ehrlichia chaffeensis (strain ATCC CRL-10679 / Arkansas)).